A 704-amino-acid polypeptide reads, in one-letter code: DNA ligase (704 aa).

NAD(+) is bound by residues 43–47, 92–93, and E124; these read DADYD and SL. Catalysis depends on K126, which acts as the N6-AMP-lysine intermediate. R147, E182, K298, and K322 together coordinate NAD(+). Positions 427, 430, 445, and 451 each coordinate Zn(2+). Residues 625–704 form the BRCT domain; it reads PVASPVAGRI…DGWLRLIGDA (80 aa).

It belongs to the NAD-dependent DNA ligase family. LigA subfamily. Mg(2+) is required as a cofactor. The cofactor is Mn(2+).

It catalyses the reaction NAD(+) + (deoxyribonucleotide)n-3'-hydroxyl + 5'-phospho-(deoxyribonucleotide)m = (deoxyribonucleotide)n+m + AMP + beta-nicotinamide D-nucleotide.. Functionally, DNA ligase that catalyzes the formation of phosphodiester linkages between 5'-phosphoryl and 3'-hydroxyl groups in double-stranded DNA using NAD as a coenzyme and as the energy source for the reaction. It is essential for DNA replication and repair of damaged DNA. The sequence is that of DNA ligase from Cereibacter sphaeroides (strain KD131 / KCTC 12085) (Rhodobacter sphaeroides).